Here is a 399-residue protein sequence, read N- to C-terminus: S-adenosylmethionine synthase (399 aa).

ATP is bound at residue H17. D19 is a Mg(2+) binding site. Residue E45 coordinates K(+). L-methionine is bound by residues E58 and Q101. The segment at 101 to 111 (QSPDIAQGVDE) is flexible loop. ATP-binding positions include 177–179 (DAK), 244–245 (RF), D253, 259–260 (RK), A276, and K280. D253 contacts L-methionine. K284 is a binding site for L-methionine.

This sequence belongs to the AdoMet synthase family. As to quaternary structure, homotetramer; dimer of dimers. Mg(2+) serves as cofactor. It depends on K(+) as a cofactor.

It localises to the cytoplasm. It carries out the reaction L-methionine + ATP + H2O = S-adenosyl-L-methionine + phosphate + diphosphate. It functions in the pathway amino-acid biosynthesis; S-adenosyl-L-methionine biosynthesis; S-adenosyl-L-methionine from L-methionine: step 1/1. In terms of biological role, catalyzes the formation of S-adenosylmethionine (AdoMet) from methionine and ATP. The overall synthetic reaction is composed of two sequential steps, AdoMet formation and the subsequent tripolyphosphate hydrolysis which occurs prior to release of AdoMet from the enzyme. The chain is S-adenosylmethionine synthase from Listeria monocytogenes serotype 4b (strain CLIP80459).